The following is a 366-amino-acid chain: tRNA/tmRNA (uracil-C(5))-methyltransferase (366 aa).

The S-adenosyl-L-methionine site is built by Q190, Y218, N223, E239, and D299. C324 serves as the catalytic Nucleophile. E358 acts as the Proton acceptor in catalysis.

The protein belongs to the class I-like SAM-binding methyltransferase superfamily. RNA M5U methyltransferase family. TrmA subfamily.

The enzyme catalyses uridine(54) in tRNA + S-adenosyl-L-methionine = 5-methyluridine(54) in tRNA + S-adenosyl-L-homocysteine + H(+). It carries out the reaction uridine(341) in tmRNA + S-adenosyl-L-methionine = 5-methyluridine(341) in tmRNA + S-adenosyl-L-homocysteine + H(+). Dual-specificity methyltransferase that catalyzes the formation of 5-methyluridine at position 54 (m5U54) in all tRNAs, and that of position 341 (m5U341) in tmRNA (transfer-mRNA). The sequence is that of tRNA/tmRNA (uracil-C(5))-methyltransferase from Shigella flexneri serotype 5b (strain 8401).